Here is a 247-residue protein sequence, read N- to C-terminus: Aspartate/glutamate leucyltransferase (247 aa).

The protein belongs to the R-transferase family. Bpt subfamily.

It is found in the cytoplasm. It catalyses the reaction N-terminal L-glutamyl-[protein] + L-leucyl-tRNA(Leu) = N-terminal L-leucyl-L-glutamyl-[protein] + tRNA(Leu) + H(+). It carries out the reaction N-terminal L-aspartyl-[protein] + L-leucyl-tRNA(Leu) = N-terminal L-leucyl-L-aspartyl-[protein] + tRNA(Leu) + H(+). Its function is as follows. Functions in the N-end rule pathway of protein degradation where it conjugates Leu from its aminoacyl-tRNA to the N-termini of proteins containing an N-terminal aspartate or glutamate. In Chromohalobacter salexigens (strain ATCC BAA-138 / DSM 3043 / CIP 106854 / NCIMB 13768 / 1H11), this protein is Aspartate/glutamate leucyltransferase.